A 311-amino-acid polypeptide reads, in one-letter code: L-lactate dehydrogenase (311 aa).

NAD(+)-binding positions include valine 12, aspartate 33, lysine 38, tyrosine 63, and 77-78; that span reads GA. Residues glutamine 80 and arginine 86 each contribute to the substrate site. NAD(+) contacts are provided by residues serine 99, 116 to 118, and serine 141; that span reads VTN. 118–121 serves as a coordination point for substrate; sequence NPVD. Residue 146–149 coordinates substrate; it reads DSSR. The beta-D-fructose 1,6-bisphosphate site is built by arginine 151 and histidine 166. Histidine 173 acts as the Proton acceptor in catalysis. Tyrosine 219 is subject to Phosphotyrosine. Residue threonine 228 participates in substrate binding.

It belongs to the LDH/MDH superfamily. LDH family. In terms of assembly, homotetramer.

It localises to the cytoplasm. It carries out the reaction (S)-lactate + NAD(+) = pyruvate + NADH + H(+). It participates in fermentation; pyruvate fermentation to lactate; (S)-lactate from pyruvate: step 1/1. Allosterically activated by fructose 1,6-bisphosphate (FBP). Catalyzes the conversion of lactate to pyruvate. The polypeptide is L-lactate dehydrogenase (Thermoanaerobacterium saccharolyticum (strain DSM 8691 / JW/SL-YS485)).